A 122-amino-acid chain; its full sequence is Large ribosomal subunit protein uL14 (122 aa).

This sequence belongs to the universal ribosomal protein uL14 family. Part of the 50S ribosomal subunit. Forms a cluster with proteins L3 and L19. In the 70S ribosome, L14 and L19 interact and together make contacts with the 16S rRNA in bridges B5 and B8.

Functionally, binds to 23S rRNA. Forms part of two intersubunit bridges in the 70S ribosome. In Methylibium petroleiphilum (strain ATCC BAA-1232 / LMG 22953 / PM1), this protein is Large ribosomal subunit protein uL14.